We begin with the raw amino-acid sequence, 305 residues long: Phosphoribosylaminoimidazole-succinocarboxamide synthase (305 aa).

It belongs to the SAICAR synthetase family.

It carries out the reaction 5-amino-1-(5-phospho-D-ribosyl)imidazole-4-carboxylate + L-aspartate + ATP = (2S)-2-[5-amino-1-(5-phospho-beta-D-ribosyl)imidazole-4-carboxamido]succinate + ADP + phosphate + 2 H(+). It functions in the pathway purine metabolism; IMP biosynthesis via de novo pathway; 5-amino-1-(5-phospho-D-ribosyl)imidazole-4-carboxamide from 5-amino-1-(5-phospho-D-ribosyl)imidazole-4-carboxylate: step 1/2. This Tropheryma whipplei (strain Twist) (Whipple's bacillus) protein is Phosphoribosylaminoimidazole-succinocarboxamide synthase.